A 148-amino-acid polypeptide reads, in one-letter code: MSKASGFLKEFRDFAVKGNAIDLAVGVIIGAAFGKIVDSVVKDLIMPLVNYILGGSVDFSNKFLVLSAPDGYAGPMTYADLTKAGAIVLAWGNFLTILINFILLALVVFIIVKAINAARRKEEEAPAEPAAPPEDVVVLREIRDLLKK.

Transmembrane regions (helical) follow at residues 21-41 (IDLA…DSVV), 45-65 (IMPL…KFLV), and 92-112 (GNFL…FIIV).

The protein belongs to the MscL family. In terms of assembly, homopentamer.

The protein localises to the cell inner membrane. Its function is as follows. Channel that opens in response to stretch forces in the membrane lipid bilayer. May participate in the regulation of osmotic pressure changes within the cell. In Bordetella petrii (strain ATCC BAA-461 / DSM 12804 / CCUG 43448), this protein is Large-conductance mechanosensitive channel.